Here is a 443-residue protein sequence, read N- to C-terminus: Thymidine phosphorylase (443 aa).

It belongs to the thymidine/pyrimidine-nucleoside phosphorylase family. As to quaternary structure, homodimer.

The enzyme catalyses thymidine + phosphate = 2-deoxy-alpha-D-ribose 1-phosphate + thymine. Its pathway is pyrimidine metabolism; dTMP biosynthesis via salvage pathway; dTMP from thymine: step 1/2. The enzymes which catalyze the reversible phosphorolysis of pyrimidine nucleosides are involved in the degradation of these compounds and in their utilization as carbon and energy sources, or in the rescue of pyrimidine bases for nucleotide synthesis. The chain is Thymidine phosphorylase from Shewanella halifaxensis (strain HAW-EB4).